The chain runs to 111 residues: 2Fe-2S ferredoxin (111 aa).

One can recognise a 2Fe-2S ferredoxin-type domain in the interval 2 to 104 (PKIVILPHQD…DLVVEIPRYT (103 aa)). Positions 42, 48, 51, and 87 each coordinate [2Fe-2S] cluster.

It belongs to the adrenodoxin/putidaredoxin family. [2Fe-2S] cluster serves as cofactor.

Functionally, ferredoxin are iron-sulfur proteins that transfer electrons in a wide variety of metabolic reactions. Although the function of this ferredoxin is unknown it is probable that it has a role as a cellular electron transfer protein. Involved in the in vivo assembly of the Fe-S clusters in a wide variety of iron-sulfur proteins. The sequence is that of 2Fe-2S ferredoxin (fdx) from Escherichia coli O157:H7.